The chain runs to 206 residues: Glycerol-3-phosphate acyltransferase 1 (206 aa).

The next 5 membrane-spanning stretches (helical) occupy residues 14-34 (IALAAAIIGYLFGSIPFGLIL), 67-87 (ATLLLDALKASAAAWVVSYFL), 91-111 (AAIIAGFFAFIGHLFPVWIGF), 124-144 (LLGVAPIMVVLFAAVWLAVAF), and 148-168 (YSSLSALVAMLVIPVALWILG).

This sequence belongs to the PlsY family. Probably interacts with PlsX.

It localises to the cell inner membrane. It catalyses the reaction an acyl phosphate + sn-glycerol 3-phosphate = a 1-acyl-sn-glycero-3-phosphate + phosphate. It functions in the pathway lipid metabolism; phospholipid metabolism. In terms of biological role, catalyzes the transfer of an acyl group from acyl-phosphate (acyl-PO(4)) to glycerol-3-phosphate (G3P) to form lysophosphatidic acid (LPA). This enzyme utilizes acyl-phosphate as fatty acyl donor, but not acyl-CoA or acyl-ACP. This is Glycerol-3-phosphate acyltransferase 1 from Rhizobium johnstonii (strain DSM 114642 / LMG 32736 / 3841) (Rhizobium leguminosarum bv. viciae).